A 70-amino-acid chain; its full sequence is U2-agatoxin-Ao1q (70 aa).

Residues 1–20 (MRSIISLLLISAMVFSMIAA) form the signal peptide. A propeptide spanning residues 21 to 34 (VPEEEGLQLSEDER) is cleaved from the precursor. 2 disulfide bridges follow: cysteine 44-cysteine 58 and cysteine 52-cysteine 68. Position 69 is a leucine amide (leucine 69).

The protein belongs to the neurotoxin 01 (U2-agtx) family. In terms of processing, does not contain a cysteine at position 53 which disrupts the cysteine framework. As to expression, expressed by the venom gland.

The protein localises to the secreted. Its function is as follows. Insect active toxin causing rapid but reversible paralysis in crickets. No activity shown in mammals. Does not show effect on mammalian voltage-gated calcium channels. In Agelena orientalis (Funnel-web spider), this protein is U2-agatoxin-Ao1q.